A 188-amino-acid polypeptide reads, in one-letter code: Ribosome maturation factor RimM (188 aa).

The 74-residue stretch at 93-166 folds into the PRC barrel domain; it reads EDEYYDHQLI…RAVIDPPPGL (74 aa).

It belongs to the RimM family. Binds ribosomal protein uS19.

Its subcellular location is the cytoplasm. Its function is as follows. An accessory protein needed during the final step in the assembly of 30S ribosomal subunit, possibly for assembly of the head region. Essential for efficient processing of 16S rRNA. May be needed both before and after RbfA during the maturation of 16S rRNA. It has affinity for free ribosomal 30S subunits but not for 70S ribosomes. The protein is Ribosome maturation factor RimM of Streptomyces coelicolor (strain ATCC BAA-471 / A3(2) / M145).